The following is a 301-amino-acid chain: Phosphatidylglycerol--prolipoprotein diacylglyceryl transferase (301 aa).

Transmembrane regions (helical) follow at residues 10 to 30 (IAFSLGPVKVHWYGLMYLASF), 57 to 77 (LLFYAMMGVVLGGRVGYMLFY), 92 to 112 (VWEGGMSFHGGLIGVLLAVAW), and 119 to 139 (LQMFDVLDFGAPLVPVGLGFG). Arg-140 lines the a 1,2-diacyl-sn-glycero-3-phospho-(1'-sn-glycerol) pocket. The next 3 membrane-spanning stretches (helical) occupy residues 202 to 222 (PSQLYEAFLEGLVMFIVLWLF), 230 to 250 (YAVSGLFALLYGVFRFLVEFV), and 264 to 284 (LTRGQILSLPLIVIGLFLFWL).

This sequence belongs to the Lgt family.

The protein localises to the cell inner membrane. The catalysed reaction is L-cysteinyl-[prolipoprotein] + a 1,2-diacyl-sn-glycero-3-phospho-(1'-sn-glycerol) = an S-1,2-diacyl-sn-glyceryl-L-cysteinyl-[prolipoprotein] + sn-glycerol 1-phosphate + H(+). The protein operates within protein modification; lipoprotein biosynthesis (diacylglyceryl transfer). Functionally, catalyzes the transfer of the diacylglyceryl group from phosphatidylglycerol to the sulfhydryl group of the N-terminal cysteine of a prolipoprotein, the first step in the formation of mature lipoproteins. This chain is Phosphatidylglycerol--prolipoprotein diacylglyceryl transferase, found in Xylella fastidiosa (strain 9a5c).